The following is an 83-amino-acid chain: Insect toxin 2-13 (83 aa).

The N-terminal stretch at 1–21 (MKLLLLLIITASMLIEGLVNA) is a signal peptide. Residues 22–80 (DVYIRRHDGCKISCTVNDKYCDNECKSEGGSYGYCYAFGCWCEGLPNDKAWKSETNTCG) enclose the LCN-type CS-alpha/beta domain. Disulfide bonds link Cys-31–Cys-79, Cys-35–Cys-56, Cys-42–Cys-61, and Cys-46–Cys-63. Gly-80 carries the glycine amide modification.

Belongs to the long (4 C-C) scorpion toxin superfamily. Sodium channel inhibitor family. Beta subfamily. Expressed by the venom gland.

It localises to the secreted. In terms of biological role, depressant insect toxins cause a transient contraction paralysis followed by a slow flaccid paralysis. They bind voltage-independently to sodium channels (Nav) and block action potentials, primarily by depolarizing the axonal membrane and suppressing the sodium current. The sequence is that of Insect toxin 2-13 from Leiurus hebraeus (Hebrew deathstalker scorpion).